A 204-amino-acid chain; its full sequence is Elongation factor Ts (204 aa).

The segment at 87–90 is involved in Mg(2+) ion dislocation from EF-Tu; the sequence is TDFV.

The protein belongs to the EF-Ts family.

Its subcellular location is the cytoplasm. Its function is as follows. Associates with the EF-Tu.GDP complex and induces the exchange of GDP to GTP. It remains bound to the aminoacyl-tRNA.EF-Tu.GTP complex up to the GTP hydrolysis stage on the ribosome. The chain is Elongation factor Ts from Frankia alni (strain DSM 45986 / CECT 9034 / ACN14a).